Reading from the N-terminus, the 112-residue chain is Peptidyl-prolyl cis-trans isomerase (112 aa).

The tract at residues 1–22 (MGVEKQVISSGNGQDFPKPGDR) is disordered. The 89-residue stretch at 20–108 (GDRITMHYTG…LFDVELLAIN (89 aa)) folds into the PPIase FKBP-type domain.

The protein belongs to the FKBP-type PPIase family. FKBP1 subfamily.

Its subcellular location is the cytoplasm. It is found in the nucleus. It carries out the reaction [protein]-peptidylproline (omega=180) = [protein]-peptidylproline (omega=0). Functionally, PPIases accelerate the folding of proteins. It catalyzes the cis-trans isomerization of proline imidic peptide bonds in oligopeptides. Has an important role in sexual development and serves as the target for rapamycin action. The protein is Peptidyl-prolyl cis-trans isomerase (fkh1) of Schizosaccharomyces pombe (strain 972 / ATCC 24843) (Fission yeast).